A 153-amino-acid polypeptide reads, in one-letter code: uncharacterized protein (153 aa).

Disordered stretches follow at residues glycine 30–aspartate 66 and isoleucine 79–aspartate 153. Over residues glutamate 45–glutamine 56 the composition is skewed to acidic residues. 2 stretches are compositionally biased toward polar residues: residues glycine 106–serine 116 and glycine 130–leucine 144.

This is an uncharacterized protein from Xenopus laevis (African clawed frog).